Here is a 79-residue protein sequence, read N- to C-terminus: Ubiquinol-cytochrome c reductase complex assembly factor 5 (79 aa).

Residues 1 to 20 are Mitochondrial matrix-facing; that stretch reads MSPYSGSVRRLLDSWPGKKR. The chain crosses the membrane as a helical span at residues 21 to 43; it reads FGVYRFLPLFFLLGAGLEFSMIN. Residues 44–79 are Mitochondrial intermembrane-facing; it reads WTVGETNFYRTFKRRQAKNYVEEQQHLQARAANNTN.

Belongs to the UQCC5 family. As to quaternary structure, interacts with respiratory complex III components Uqcc1 and RFeSP; the interactions are probably involved in the assembly and stability of the mitochondrial ubiquinol-cytochrome c reductase complex. Interacts with sloth2; the interaction stabilizes both components. In terms of tissue distribution, expressed in the brain.

Its subcellular location is the mitochondrion inner membrane. The protein resides in the mitochondrion. Required for the assembly and stability of the mitochondrial ubiquinol-cytochrome c reductase complex (complex III (CIII) or cytochrome b-c1 complex), a multisubunit transmembrane complex that is part of the mitochondrial electron transport chain (ETC) which drives oxidative phosphorylation. This chain is Ubiquinol-cytochrome c reductase complex assembly factor 5, found in Drosophila melanogaster (Fruit fly).